Consider the following 652-residue polypeptide: Inactive leucine-rich repeat receptor-like serine/threonine-protein kinase At1g60630 (652 aa).

The N-terminal stretch at 1 to 23 (MISSSSCMFFLVFAFFLISPVRS) is a signal peptide. At 24–256 (SDVEALLSLK…SRTKLIGIIS (233 aa)) the chain is on the extracellular side. LRR repeat units lie at residues 64–84 (SKLVLENLNLSGSLNGKSLNQ), 85–108 (LDQLRVLSFKGNSLSGSIPNLSGL), 109–132 (VNLKSLYLNDNNFSGEFPESLTSL), 134–156 (RLKTVVLSRNRFSGKIPSSLLRL), 158–178 (RLYTFYVQDNLFSGSIPPLNQ), and 179–203 (ATLRFFNVSNNQLSGHIPPTQALNR). Residues asparagine 72, asparagine 104, and asparagine 120 are each glycosylated (N-linked (GlcNAc...) asparagine). 3 N-linked (GlcNAc...) asparagine glycosylation sites follow: asparagine 185, asparagine 205, and asparagine 225. A helical transmembrane segment spans residues 257 to 277 (GSICGGILILLLTFLLICLLW). Topologically, residues 278-652 (RRKRSKSKRE…SLPREDHMSI (375 aa)) are cytoplasmic. Residues 286 to 321 (REERRSKRVAESKEAKTAETEEGTSDQKNKRFSWEK) are disordered. Residues 350–624 (KASAETLGRG…VKDARAEAAL (275 aa)) enclose the Protein kinase domain. Serine 352 carries the phosphoserine modification. Residues 356–364 (LGRGTLGST) and lysine 378 each bind ATP. Phosphoserine occurs at positions 430 and 433. A Phosphothreonine modification is found at threonine 509. Residues 630-652 (SDHSPGRWSDTIQSLPREDHMSI) are disordered.

Belongs to the protein kinase superfamily. Ser/Thr protein kinase family.

It is found in the cell membrane. This chain is Inactive leucine-rich repeat receptor-like serine/threonine-protein kinase At1g60630, found in Arabidopsis thaliana (Mouse-ear cress).